The following is a 2531-amino-acid chain: Probable polyketide synthase 26 (2531 aa).

Positions 10–433 (QEDIAIIGFR…GSNCCLVLTE (424 aa)) constitute a Ketosynthase family 3 (KS3) domain. Catalysis depends on for beta-ketoacyl synthase activity residues C174, H316, and H356. An acyl/malonyl transferase region spans residues 620-653 (GINPSFIVGHSLGELPMAFCSGMIDFDTVCYLLY). S630 (for acyl/malonyl transferase activity) is an active-site residue. The N-terminal hotdog fold stretch occupies residues 915-1036 (MDTLGFSNEK…ANYHLSHRDD (122 aa)). In terms of domain architecture, PKS/mFAS DH spans 915 to 1206 (MDTLGFSNEK…LKSLIPLKDP (292 aa)). H948 (proton acceptor; for dehydratase activity) is an active-site residue. The tract at residues 1055-1206 (NLTKLSKNQF…LKSLIPLKDP (152 aa)) is C-terminal hotdog fold. D1117 serves as the catalytic Proton donor; for dehydratase activity. In terms of domain architecture, Carrier spans 2431–2509 (ASENPVKDLL…DNIKILTDSY (79 aa)). S2468 carries the O-(pantetheine 4'-phosphoryl)serine modification.

It depends on pantetheine 4'-phosphate as a cofactor.

Probable polyketide synthase. The chain is Probable polyketide synthase 26 (pks26) from Dictyostelium discoideum (Social amoeba).